Consider the following 468-residue polypeptide: Purple acid phosphatase 10 (468 aa).

The signal sequence occupies residues 1–25 (MGRVRKSDFGSIVLVLCCVLNSLLC). Asparagine 95 and asparagine 113 each carry an N-linked (GlcNAc...) asparagine glycan. Aspartate 167 is a Fe cation binding site. Asparagine 175 is a glycosylation site (N-linked (GlcNAc...) asparagine). Positions 196 and 199 each coordinate Fe cation. Aspartate 196 is a Zn(2+) binding site. Asparagine 233 is a Zn(2+) binding site. Asparagine 233 contributes to the substrate binding site. Asparagine 306 is a glycosylation site (N-linked (GlcNAc...) asparagine). A Zn(2+)-binding site is contributed by histidine 318. Residue histidine 328 is the Proton donor of the active site. Histidine 355 is a binding site for Zn(2+). 355-357 (HVH) contacts substrate. Residue histidine 357 participates in Fe cation binding. An N-linked (GlcNAc...) asparagine glycan is attached at asparagine 428.

Belongs to the metallophosphoesterase superfamily. Purple acid phosphatase family. In terms of assembly, homodimer; disulfide-linked. Fe cation serves as cofactor. Zn(2+) is required as a cofactor. Expressed in roots, stems, leaves, flowers and siliques.

The protein resides in the secreted. It is found in the cytoplasm. It carries out the reaction a phosphate monoester + H2O = an alcohol + phosphate. The polypeptide is Purple acid phosphatase 10 (PAP10) (Arabidopsis thaliana (Mouse-ear cress)).